A 1967-amino-acid chain; its full sequence is MALTYRSPVEEVLTLFEPTAQSLIASAAVSAFQRHEKDNFEWFRYSVPAFAKEHLSKAGIYLSPYAGFPHSHPVCKTLENYILYVVVPSIVNSTFFFVGIKDFKINFLKSRFDKLNMISALNRYVSSADKIRYGNDFVIRAGVEHRALKRHRGLVDSPTLKALMPNVKSGSKLFLHDELHYWSKEELIGFLEICEPEVLLGTVIYPPELLIGSDCSLNPWCYEYEVKKKKLLFYPDGVRSEGYEQPLSGGYLLQTSRIKLPNAGIYCVDLLCSRFAHHLFSITRGDLITPDNRSFGPFEAVHSGALAGISRGKPNFYPVSQHTILRVYRYLRSLKKPDKQSAMAKFSQIVHEPCGRAVKFMEEFSDLIINTGTLRTVINPEQVKLFFGNLGRCMPPCFASKLKGTRTVCLDEFISMLRPLSVDVTLETISMHSMTMVVTTWSQEAEEGVDLPKIFEEKWEGKQSLDRTEAPYLGLAPFVDYKIQWRLQFNIPKFLNQLAELFVNSCSVNGGVRSMSIPAYLRRLATCRSCVGRAMLCCLTEVDIASLRVVVRNRYPYTEDFYRCRRRWFLRIGAQRRPSFYIEDAKHLERLGQFEEEQFQRPMSRRSLYTLASVSMNGTDDPFCSDCFYDPVPVARAKIVPTPTVIVERALEPLAIDTGTTSDAPCDAPGATCLRGAQAVVCACGLSMAVSAVPYAELKMDFYPDALKGRDAAWYSKEDREYKYNGGSHLCRGWPKWLQLWMQANGVDETYDCMLAQRYGAQGKIGFHADNEEIFMRGAPVHTVSMDGNADFGTECAAGRQYTTLRGNVQFTMPSGFQETHKHAVRNTTAGRVSYTFRRLAKKDESRVIEEVVEVETKDMGFSSSLFGVQIIVDEPCDGVEETFNVQCVPGDGNCFWHSLGSFTGLTVECMKAGIKNFACGPEGAEKLSRQLEPNVWAEDEALCAACAHLGVDLVIFDEDQGFKMLYRYPGNKREALLRLKGSHFEPLEPKEMCVVKAIAQAVKRSPMDVLRVALKKMGEDFKEQICRGKGVMLDVFMVLAKIFDVSACVLQGTEQIMINPKGRIKGLFRMTTDHLSYDGVPDKVKHSEVNVYKHDVALQIEDLIELRELSSLVEYTPSFSRAKLLADCLHDGSTGVMCSELYNDKGHLCPEGRETTRVTIGVLLGTFGCGKSRLFKEILFKLCGKSVCYISPRKALCDSFDDEIRKARGNMGERGIKHYKSLTFEKAILQASKLHKGSLVIIDEIQLYPPGYLDLLLLLAGPTMKYFALGDPCQSDYDSEKDRTILGSVRSDVFELLDGIEYKFNILSRRFQSSLFRGRLPCLMYEEDLEAGAPLRLIDGLESIDTSAAYSRCCLVSSFEEKKIVNAYFGERTKCLTFGESTGMTFDVGCVLITSISAHTSEQRWITALSRFRKDIVFVNAASVAWDTLQSVYANRWLGRFLNRSARQEDLRRMLPGTPLFVEGFQKNLLGADEGKRECKLEGDPWLKTMVDLLQVEDMEDIEIAKEVLQDEWCKTHLPQCELESVRARWVHKILAKEFREKRMGCLVSEQFTDQHSKQMGKHLTNSAERFETIYPRHRAADTVTFIMAVRKRLSFSCPIKESAKLNQALPYGPFLLKEFLKRVPLKPMHDRKMMEQAKFDFEEKKTSKSAATIENHSNRSCRDWLIDVGLVFSKSQLCTKFDNRFRDAKRAQTIVCFQHAVLCRFAPYMRYIEKKLNEVLPSKYYIHSGKGLEELNRWVIEGRFEGVCTESDYEAFDASQDHYIVAFEICLMRYLGLPNDLIEDYKFIKTHLGSKLGNFAIMRFSGEASTFLFNTMANMLFTFLQYDLKGNERICFAGDDMCANGRLHVSSKHKNFMSKLKLKAKVSNTMNPTFCGWNLSSDGIFKKPQLVLERLCIAKETNNLANCIDNYAIEVSFAYLMGERAKQRMDEEEVEAFYNCVRIIVKSKHLLKSDVATIYQTARVD.

Positions 63–252 constitute an Alphavirus-like MT domain; it reads SPYAGFPHSH…YEQPLSGGYL (190 aa). The region spanning 750-841 is the Fe2OG dioxygenase domain; it reads TYDCMLAQRY…RVSYTFRRLA (92 aa). Fe cation is bound by residues His-768, Asp-770, and His-823. Residue Arg-832 participates in 2-oxoglutarate binding. An OTU domain is found at 884–991; it reads FNVQCVPGDG…GSHFEPLEPK (108 aa). The 91-residue stretch at 990-1080 folds into the Peptidase C23 domain; the sequence is PKEMCVVKAI…MTTDHLSYDG (91 aa). Catalysis depends on residues Cys-994 and His-1075. The 176-residue stretch at 1133–1308 folds into the (+)RNA virus helicase ATP-binding domain; that stretch reads GSTGVMCSEL…DGIEYKFNIL (176 aa). 1166-1173 serves as a coordination point for ATP; sequence GTFGCGKS. Residues 1309 to 1455 enclose the (+)RNA virus helicase C-terminal domain; the sequence is SRRFQSSLFR…SARQEDLRRM (147 aa). In terms of domain architecture, RdRp catalytic spans 1748 to 1855; the sequence is GVCTESDYEA…NGRLHVSSKH (108 aa).

It belongs to the potexviruses/carlaviruses RNA replication protein family. Requires Fe(2+) as cofactor. Specific enzymatic cleavages by the viral protease yield mature proteins.

It carries out the reaction ATP + H2O = ADP + phosphate + H(+). The catalysed reaction is RNA(n) + a ribonucleoside 5'-triphosphate = RNA(n+1) + diphosphate. In terms of biological role, RNA-directed RNA polymerase involved in viral RNA replication. Functionally, protease: Thiol protease that cleaves the polyprotein. The protein is RNA replication polyprotein of Vaccinium corymbosum (Highbush blueberry).